Consider the following 319-residue polypeptide: tRNA-cytidine(32) 2-sulfurtransferase (319 aa).

The short motif at 49 to 54 is the PP-loop motif element; it reads SGGKDS. Positions 124, 127, and 215 each coordinate [4Fe-4S] cluster.

Belongs to the TtcA family. Homodimer. Mg(2+) serves as cofactor. [4Fe-4S] cluster is required as a cofactor.

It is found in the cytoplasm. It carries out the reaction cytidine(32) in tRNA + S-sulfanyl-L-cysteinyl-[cysteine desulfurase] + AH2 + ATP = 2-thiocytidine(32) in tRNA + L-cysteinyl-[cysteine desulfurase] + A + AMP + diphosphate + H(+). Its pathway is tRNA modification. Functionally, catalyzes the ATP-dependent 2-thiolation of cytidine in position 32 of tRNA, to form 2-thiocytidine (s(2)C32). The sulfur atoms are provided by the cysteine/cysteine desulfurase (IscS) system. The protein is tRNA-cytidine(32) 2-sulfurtransferase of Shewanella amazonensis (strain ATCC BAA-1098 / SB2B).